A 94-amino-acid chain; its full sequence is Alpha-elapitoxin-Nss2a (94 aa).

A signal peptide spans 1 to 21; sequence MKTLLLTLVVVTIVCLDLGDS. 5 disulfides stabilise this stretch: Cys-24–Cys-41, Cys-34–Cys-62, Cys-47–Cys-51, Cys-66–Cys-77, and Cys-78–Cys-83.

Belongs to the three-finger toxin family. Long-chain subfamily. Type II alpha-neurotoxin sub-subfamily. As to expression, expressed by the venom gland.

Its subcellular location is the secreted. Binds with high affinity to muscular (alpha-1/CHRNA1) and neuronal (alpha-7/CHRNA7) nicotinic acetylcholine receptor (nAChR) and inhibits acetylcholine from binding to the receptor, thereby impairing neuromuscular and neuronal transmission. This chain is Alpha-elapitoxin-Nss2a, found in Notechis scutatus scutatus (Mainland tiger snake).